Here is a 149-residue protein sequence, read N- to C-terminus: Deoxyuridine 5'-triphosphate nucleotidohydrolase (149 aa).

Residues 66 to 68 (RSG), asparagine 79, 83 to 85 (TID), and lysine 93 each bind substrate.

The protein belongs to the dUTPase family. Mg(2+) is required as a cofactor.

It catalyses the reaction dUTP + H2O = dUMP + diphosphate + H(+). The protein operates within pyrimidine metabolism; dUMP biosynthesis; dUMP from dCTP (dUTP route): step 2/2. Its function is as follows. This enzyme is involved in nucleotide metabolism: it produces dUMP, the immediate precursor of thymidine nucleotides and it decreases the intracellular concentration of dUTP so that uracil cannot be incorporated into DNA. The polypeptide is Deoxyuridine 5'-triphosphate nucleotidohydrolase (Corynebacterium glutamicum (strain ATCC 13032 / DSM 20300 / JCM 1318 / BCRC 11384 / CCUG 27702 / LMG 3730 / NBRC 12168 / NCIMB 10025 / NRRL B-2784 / 534)).